Reading from the N-terminus, the 348-residue chain is Lipopolysaccharide heptosyltransferase 2 (348 aa).

This sequence belongs to the glycosyltransferase 9 family.

It carries out the reaction an L-alpha-D-Hep-(1-&gt;5)-[alpha-Kdo-(2-&gt;4)]-alpha-Kdo-(2-&gt;6)-lipid A + ADP-L-glycero-beta-D-manno-heptose = an L-alpha-D-Hep-(1-&gt;3)-L-alpha-D-Hep-(1-&gt;5)-[alpha-Kdo-(2-&gt;4)]-alpha-Kdo-(2-&gt;6)-lipid A + ADP + H(+). The protein operates within bacterial outer membrane biogenesis; LPS core biosynthesis. Glycosyltransferase involved in the biosynthesis of the core oligosaccharide region of lipopolysaccharide (LPS). Catalyzes the addition of the second heptose unit to the heptosyl-Kdo2-lipid A module. In Salmonella typhimurium (strain LT2 / SGSC1412 / ATCC 700720), this protein is Lipopolysaccharide heptosyltransferase 2.